The chain runs to 267 residues: Exosome complex component Rrp42 (267 aa).

It belongs to the RNase PH family. Rrp42 subfamily. In terms of assembly, component of the archaeal exosome complex. Forms a hexameric ring-like arrangement composed of 3 Rrp41-Rrp42 heterodimers. The hexameric ring associates with a trimer of Rrp4 and/or Csl4 subunits.

The protein resides in the cytoplasm. Functionally, non-catalytic component of the exosome, which is a complex involved in RNA degradation. Contributes to the structuring of the Rrp41 active site. In Methanopyrus kandleri (strain AV19 / DSM 6324 / JCM 9639 / NBRC 100938), this protein is Exosome complex component Rrp42.